A 469-amino-acid chain; its full sequence is MWKEKVQQYEDQIINDLKGLLAIESVRDDAKASEDAPVGPGPRKALDYMYEIAHRDGFTTHDVDHIAGRIEAGKGNDVLGILCHVDVVPAGDGWDSNPFEPVVTEDAIIARGTLDDKGPTIAAYYAIKILEDMNVDWKKRIHMIIGTDEESDWKCTDRYFKTEEMPTLGFAPDAEFPCIHGEKGITTFDLVQNKLAEDQDESDYELITFKSGERYNMVPDHAEARVLVKENMTDVIQDFEYFLEQNHLQGDSTVDSGILVLTVEGKAVHGMDPSIGVNAGLYLLKFLASLNLDNNAQAFVAFSNRYLFNSDFGEKMGMKFHTDVMGDVTTNIGVITYDNENAGLFGINLRYPEGFEFEKAMDRFANEIQQYGFEVKLGKVQPPHYVDKNDPFVQKLVTAYRNQTNDMTEPYTIGGGTYARNLDKGVAFGAMFSDSEDLMHQKNEYITKKQLFNATSIYLEAIYSLCVEE.

His84 contacts Zn(2+). The active site involves Asp86. A Zn(2+)-binding site is contributed by Asp115. The active-site Proton acceptor is Glu149. Zn(2+)-binding residues include Glu150, Asp173, and His440.

This sequence belongs to the peptidase M20A family. Zn(2+) is required as a cofactor.

The chain is Putative dipeptidase SAB1611c from Staphylococcus aureus (strain bovine RF122 / ET3-1).